We begin with the raw amino-acid sequence, 155 residues long: Calmodulin, flagellar (155 aa).

EF-hand domains lie at 14–49, 50–85, 87–122, and 123–155; these read EQIA…LGQN, PTEA…KMKD, DNEE…LGEK, and LTDE…MMQK. D27, D29, D31, T33, E38, D63, D65, N67, T69, E74, D100, D102, N104, E111, D136, D138, D140, Q142, and E147 together coordinate Ca(2+).

It belongs to the calmodulin family.

It localises to the cell projection. It is found in the cilium. The protein resides in the flagellum. Its function is as follows. Calmodulin mediates the control of a large number of enzymes, ion channels and other proteins by Ca(2+). Among the enzymes to be stimulated by the calmodulin-Ca(2+) complex are a number of protein kinases and phosphatases. This Naegleria gruberi (Amoeba) protein is Calmodulin, flagellar (CAM1).